Consider the following 285-residue polypeptide: Foldase protein PrsA 2 (285 aa).

Residues 1–20 (MRGKHIFIITALISILMLAA) form the signal peptide. A lipid anchor (N-palmitoyl cysteine) is attached at C21. C21 carries S-diacylglycerol cysteine lipidation. Residues 134 to 224 (KPEIKASHIL…NGYHIIKLTG (91 aa)) enclose the PpiC domain.

It belongs to the PrsA family.

It localises to the cell membrane. It catalyses the reaction [protein]-peptidylproline (omega=180) = [protein]-peptidylproline (omega=0). Its function is as follows. Plays a major role in protein secretion by helping the post-translocational extracellular folding of several secreted proteins. Important for the secretion of the protective antigen. The three PsrA proteins in this organism show different but overlapping substrate specificities. The polypeptide is Foldase protein PrsA 2 (prsA2) (Bacillus anthracis).